A 303-amino-acid chain; its full sequence is Taste receptor type 2 member 2 (303 aa).

At 1–10 (MALSFSAILH) the chain is on the extracellular side. The chain crosses the membrane as a helical span at residues 11–31 (IIMMSAEFFTGITVNGFLIIV). The Cytoplasmic segment spans residues 32-56 (NCNELIKHRKLMPIQILLMCIGMSR). The helical transmembrane segment at 57 to 77 (FGLQMVLMVQSFFSVFFPLLY) threads the bilayer. Residues 78–79 (VK) are Extracellular-facing. The helical transmembrane segment at 80–100 (IIYGAAMMFLWMFFSSISLWF) threads the bilayer. At 101-102 (AT) the chain is on the cytoplasmic side. Residues 103–123 (CLSVFYCLKISGFTQSCFLWL) form a helical membrane-spanning segment. At 124–129 (KFRIPK) the chain is on the extracellular side. A helical membrane pass occupies residues 130-150 (LIPWLLLGSVLASVSIASVCI). Topologically, residues 151-185 (EVDYAKNVEEDALRNTTLKKSKTKIKKISEVLLVN) are cytoplasmic. Residues 186 to 206 (LALIFPLAIFVMCTSMLLISL) traverse the membrane as a helical segment. The Extracellular portion of the chain corresponds to 207–234 (YKHTHRMQHGSHGFRNANTEAHINALKT). Residues 235–255 (VITFFCFFISYFAAFMTNMTF) form a helical membrane-spanning segment. Over 256 to 277 (SLPYRSHQFFMLKDIMAAYPSG) the chain is Cytoplasmic.

Belongs to the G-protein coupled receptor T2R family.

It localises to the cell membrane. Functionally, bitter taste receptor that detects natural and synthetic bitter compounds. This chain is Taste receptor type 2 member 2, found in Homo sapiens (Human).